The chain runs to 313 residues: Methionyl-tRNA formyltransferase (313 aa).

S110 to P113 serves as a coordination point for (6S)-5,6,7,8-tetrahydrofolate.

Belongs to the Fmt family.

It carries out the reaction L-methionyl-tRNA(fMet) + (6R)-10-formyltetrahydrofolate = N-formyl-L-methionyl-tRNA(fMet) + (6S)-5,6,7,8-tetrahydrofolate + H(+). Attaches a formyl group to the free amino group of methionyl-tRNA(fMet). The formyl group appears to play a dual role in the initiator identity of N-formylmethionyl-tRNA by promoting its recognition by IF2 and preventing the misappropriation of this tRNA by the elongation apparatus. This Enterococcus faecalis (strain ATCC 700802 / V583) protein is Methionyl-tRNA formyltransferase.